The sequence spans 105 residues: Small ribosomal subunit protein uS10 (105 aa).

The protein belongs to the universal ribosomal protein uS10 family. As to quaternary structure, part of the 30S ribosomal subunit.

Involved in the binding of tRNA to the ribosomes. The chain is Small ribosomal subunit protein uS10 from Synechococcus sp. (strain JA-3-3Ab) (Cyanobacteria bacterium Yellowstone A-Prime).